The sequence spans 357 residues: Uroporphyrinogen decarboxylase (357 aa).

Residues 27-31 (RQAGR), Asp-77, Tyr-154, Thr-209, and His-327 contribute to the substrate site.

This sequence belongs to the uroporphyrinogen decarboxylase family. In terms of assembly, homodimer.

The protein resides in the cytoplasm. It carries out the reaction uroporphyrinogen III + 4 H(+) = coproporphyrinogen III + 4 CO2. It participates in porphyrin-containing compound metabolism; protoporphyrin-IX biosynthesis; coproporphyrinogen-III from 5-aminolevulinate: step 4/4. Its function is as follows. Catalyzes the decarboxylation of four acetate groups of uroporphyrinogen-III to yield coproporphyrinogen-III. This is Uroporphyrinogen decarboxylase from Nitrosococcus oceani (strain ATCC 19707 / BCRC 17464 / JCM 30415 / NCIMB 11848 / C-107).